The primary structure comprises 913 residues: Alanine--tRNA ligase (913 aa).

The Zn(2+) site is built by His600, His604, Cys703, and His707.

The protein belongs to the class-II aminoacyl-tRNA synthetase family. Requires Zn(2+) as cofactor.

It is found in the cytoplasm. It catalyses the reaction tRNA(Ala) + L-alanine + ATP = L-alanyl-tRNA(Ala) + AMP + diphosphate. In terms of biological role, catalyzes the attachment of alanine to tRNA(Ala) in a two-step reaction: alanine is first activated by ATP to form Ala-AMP and then transferred to the acceptor end of tRNA(Ala). Also edits incorrectly charged Ser-tRNA(Ala) and Gly-tRNA(Ala) via its editing domain. This Methanothrix thermoacetophila (strain DSM 6194 / JCM 14653 / NBRC 101360 / PT) (Methanosaeta thermophila) protein is Alanine--tRNA ligase.